We begin with the raw amino-acid sequence, 222 residues long: Cytochrome b6 (222 aa).

A helical transmembrane segment spans residues 39 to 59 (IFYCLGGITLVCFLVQFATGF). Residue Cys42 coordinates heme c. Heme b is bound by residues His93 and His107. The next 3 membrane-spanning stretches (helical) occupy residues 97–117 (ASMM…TGGF), 123–143 (LTWM…VTGY), and 193–213 (LHTF…FLMI). 2 residues coordinate heme b: His194 and His209.

Belongs to the cytochrome b family. PetB subfamily. The 4 large subunits of the cytochrome b6-f complex are cytochrome b6, subunit IV (17 kDa polypeptide, PetD), cytochrome f and the Rieske protein, while the 4 small subunits are PetG, PetL, PetM and PetN. The complex functions as a dimer. It depends on heme b as a cofactor. The cofactor is heme c.

It localises to the cellular thylakoid membrane. Functionally, component of the cytochrome b6-f complex, which mediates electron transfer between photosystem II (PSII) and photosystem I (PSI), cyclic electron flow around PSI, and state transitions. In Crocosphaera subtropica (strain ATCC 51142 / BH68) (Cyanothece sp. (strain ATCC 51142)), this protein is Cytochrome b6.